The chain runs to 612 residues: Probable Xaa-Pro aminopeptidase P (612 aa).

Mn(2+) contacts are provided by D409, D420, E518, and E532.

The protein belongs to the peptidase M24B family. It depends on Mn(2+) as a cofactor.

The enzyme catalyses Release of any N-terminal amino acid, including proline, that is linked to proline, even from a dipeptide or tripeptide.. Its function is as follows. Catalyzes the removal of a penultimate prolyl residue from the N-termini of peptides. The chain is Probable Xaa-Pro aminopeptidase P (AMPP) from Verticillium alfalfae (strain VaMs.102 / ATCC MYA-4576 / FGSC 10136) (Verticillium wilt of alfalfa).